Reading from the N-terminus, the 1246-residue chain is Superkiller complex protein 2 (1246 aa).

The tract at residues 220 to 246 is disordered; it reads LGGGDEDENEAVGQPGGPRGDTVSASP. Serine 245 and serine 256 each carry phosphoserine. The 157-residue stretch at 319 to 475 folds into the Helicase ATP-binding domain; sequence ILHLERHDSV…WIGRLKRRQI (157 aa). Residue 332–339 participates in ATP binding; that stretch reads AHTSAGKT. A DEVH box motif is present at residues 423 to 426; sequence DEVH. The 171-residue stretch at 585-755 folds into the Helicase C-terminal domain; the sequence is GLTSLDLTTS…LTYTMILNLL (171 aa).

Belongs to the helicase family. SKI2 subfamily. In terms of assembly, component of the SKI complex which consists of SKIC2, SKIC3 and SKIC8. Interacts with HBS1L isoform 2.

It is found in the nucleus. The protein localises to the cytoplasm. The enzyme catalyses ATP + H2O = ADP + phosphate + H(+). Functionally, helicase component of the SKI complex, a multiprotein complex that assists the RNA-degrading exosome during the mRNA decay and quality-control pathways. The SKI complex catalyzes mRNA extraction from 80S ribosomal complexes in the 3'-5' direction and channels mRNA to the cytosolic exosome for degradation. SKI-mediated extraction of mRNA from stalled ribosomes allow binding of the Pelota-HBS1L complex and subsequent ribosome disassembly by ABCE1 for ribosome recycling. In the nucleus, the SKI complex associates with transcriptionally active genes in a manner dependent on PAF1 complex (PAF1C). The chain is Superkiller complex protein 2 from Homo sapiens (Human).